A 238-amino-acid polypeptide reads, in one-letter code: DNA repair protein RecO (238 aa).

This sequence belongs to the RecO family.

Functionally, involved in DNA repair and RecF pathway recombination. In Flavobacterium psychrophilum (strain ATCC 49511 / DSM 21280 / CIP 103535 / JIP02/86), this protein is DNA repair protein RecO.